Reading from the N-terminus, the 400-residue chain is Melanization protease 1 (400 aa).

An N-terminal signal peptide occupies residues 1–22 (MEPHFFFTVLWMLLMGTSSTYA). Positions 23 to 137 (QEIFGYCRTP…PNCGENFGDR (115 aa)) are cleaved as a propeptide — activation peptide. A Clip domain is found at 28–91 (YCRTPDENSG…FCFTNVQICC (64 aa)). 3 disulfides stabilise this stretch: C29–C90, C39–C70, and C45–C91. The disordered stretch occupies residues 98–120 (NQQPQWGNHPQPTQTTKPTKRSG). 3 disulfide bridges follow: C130/C268, C168/C184, and C210/C220. The region spanning 138–399 (VVGGNETTKR…YLNWIENNVR (262 aa)) is the Peptidase S1 domain. N142 is a glycosylation site (N-linked (GlcNAc...) asparagine). Residue H183 is the Charge relay system of the active site. The Ca(2+) site is built by E201, D203, T206, and D209. D248 serves as the catalytic Charge relay system. N296 carries N-linked (GlcNAc...) asparagine glycosylation. Intrachain disulfides connect C315–C332 and C342–C375. Residue S346 is the Charge relay system of the active site.

It belongs to the peptidase S1 family. CLIP subfamily.

Its function is as follows. Serine protease which plays an essential role in the melanization immune response by acting downstream of sp7 to activate prophenoloxidase (PPO1). May function in diverse Hayan-dependent PPO1-activating cascades that are negatively controlled by different serpin proteins; Spn27A in the hemolymph and Spn77BA in the trachea. Regulation of melanization and PPO1 activation appears to be largely independent of the Toll signaling pathway. This Drosophila melanogaster (Fruit fly) protein is Melanization protease 1.